The sequence spans 207 residues: Uracil phosphoribosyltransferase (207 aa).

5-phospho-alpha-D-ribose 1-diphosphate contacts are provided by residues R77, R102, and D129–S137. Uracil is bound by residues I192 and G197–A199. D198 provides a ligand contact to 5-phospho-alpha-D-ribose 1-diphosphate.

The protein belongs to the UPRTase family. Mg(2+) is required as a cofactor.

It catalyses the reaction UMP + diphosphate = 5-phospho-alpha-D-ribose 1-diphosphate + uracil. It functions in the pathway pyrimidine metabolism; UMP biosynthesis via salvage pathway; UMP from uracil: step 1/1. With respect to regulation, allosterically activated by GTP. Its function is as follows. Catalyzes the conversion of uracil and 5-phospho-alpha-D-ribose 1-diphosphate (PRPP) to UMP and diphosphate. This is Uracil phosphoribosyltransferase from Dictyoglomus turgidum (strain DSM 6724 / Z-1310).